An 85-amino-acid polypeptide reads, in one-letter code: Small ribosomal subunit protein bS18 (85 aa).

This sequence belongs to the bacterial ribosomal protein bS18 family. In terms of assembly, part of the 30S ribosomal subunit. Forms a tight heterodimer with protein bS6.

Binds as a heterodimer with protein bS6 to the central domain of the 16S rRNA, where it helps stabilize the platform of the 30S subunit. This chain is Small ribosomal subunit protein bS18, found in Hyphomonas neptunium (strain ATCC 15444).